A 102-amino-acid chain; its full sequence is Large ribosomal subunit protein bL21 (102 aa).

It belongs to the bacterial ribosomal protein bL21 family. As to quaternary structure, part of the 50S ribosomal subunit. Contacts protein L20.

In terms of biological role, this protein binds to 23S rRNA in the presence of protein L20. The chain is Large ribosomal subunit protein bL21 from Phytoplasma mali (strain AT).